The following is a 416-amino-acid chain: Diaminopimelate decarboxylase (416 aa).

K60 bears the N6-(pyridoxal phosphate)lysine mark. Pyridoxal 5'-phosphate contacts are provided by residues G240 and 274–277 (EPGR). 3 residues coordinate substrate: R277, R313, and Y317. The active-site Proton donor is the C343. Positions 344 and 371 each coordinate substrate. Y371 contributes to the pyridoxal 5'-phosphate binding site.

Belongs to the Orn/Lys/Arg decarboxylase class-II family. LysA subfamily. Homodimer. Requires pyridoxal 5'-phosphate as cofactor.

It catalyses the reaction meso-2,6-diaminopimelate + H(+) = L-lysine + CO2. It participates in amino-acid biosynthesis; L-lysine biosynthesis via DAP pathway; L-lysine from DL-2,6-diaminopimelate: step 1/1. Specifically catalyzes the decarboxylation of meso-diaminopimelate (meso-DAP) to L-lysine. The protein is Diaminopimelate decarboxylase of Pseudomonas fluorescens.